The primary structure comprises 215 residues: N-(5'-phosphoribosyl)anthranilate isomerase (215 aa).

This sequence belongs to the TrpF family.

The catalysed reaction is N-(5-phospho-beta-D-ribosyl)anthranilate = 1-(2-carboxyphenylamino)-1-deoxy-D-ribulose 5-phosphate. The protein operates within amino-acid biosynthesis; L-tryptophan biosynthesis; L-tryptophan from chorismate: step 3/5. The polypeptide is N-(5'-phosphoribosyl)anthranilate isomerase (Cellvibrio japonicus (strain Ueda107) (Pseudomonas fluorescens subsp. cellulosa)).